Consider the following 220-residue polypeptide: MGWLFGAPRLVEEKDALKGGPHPVLPNPQPHAVLGTLRGQPGTETIYIGIGCYWGAEKLFWETPGVVYTSVGFAGGITPNPTYRETCTGRTNHTEIVEVVYDPTQVTFDELVVKAMEAHDPTQGYRQGNDTGTQYRSAIYTAGPNAEQQAQRAREIVEHYAPKLAAAGLGRITTEILPLASTPAGEYYMAEDEHQQYLHKNPLGYCPHHSTGVACGIPEA.

The active site involves Cys52.

The protein belongs to the MsrA Met sulfoxide reductase family.

The catalysed reaction is L-methionyl-[protein] + [thioredoxin]-disulfide + H2O = L-methionyl-(S)-S-oxide-[protein] + [thioredoxin]-dithiol. It carries out the reaction [thioredoxin]-disulfide + L-methionine + H2O = L-methionine (S)-S-oxide + [thioredoxin]-dithiol. Its function is as follows. Has an important function as a repair enzyme for proteins that have been inactivated by oxidation. Catalyzes the reversible oxidation-reduction of methionine sulfoxide in proteins to methionine. This Corynebacterium diphtheriae (strain ATCC 700971 / NCTC 13129 / Biotype gravis) protein is Peptide methionine sulfoxide reductase MsrA.